The sequence spans 708 residues: O-antigen chain terminator bifunctional methyltransferase/kinase WbdD (708 aa).

Residues 1–210 form a methyltransferase region; that stretch reads MTKDLNTLVS…VPRPMYLVSN (210 aa). S-adenosyl-L-methionine is bound by residues 16–17, Arg-36, Gly-61, 82–87, 108–111, and Leu-128; these read YQ, DFQQEN, and GRIE. Residues 211 to 459 are kinase; the sequence is HRVLINDFNQ…AKLPSAEQQR (249 aa). ATP-binding positions include Pro-229, His-237, 241–243, Lys-252, Glu-274, 309–311, Met-358, and Asp-369; these read RRY and EKL. Residues 485 to 594 adopt a coiled-coil conformation; it reads AGSEALRGQI…EIEKIHRSRS (110 aa). The tract at residues 601–669 is required for membrane-binding; it reads YRYLGLQIHL…RLYRRMNPLP (69 aa). Residues 687-708 are required for localizing WbdA to the membrane; it reads VMHPELLPPEVYEIYLKLTKNK.

The protein belongs to the WbdD family. As to quaternary structure, homotrimer in solution. Interacts with WbdA.

The protein resides in the cell inner membrane. It carries out the reaction 3-O-phospho-alpha-D-Man-(1-&gt;2)-alpha-D-Man-(1-&gt;2)-[alpha-D-Man-(1-&gt;3)-alpha-D-Man-(1-&gt;3)-alpha-D-Man-(1-&gt;2)-alpha-D-Man-(1-&gt;2)](n)-alpha-D-Man-(1-&gt;3)-alpha-D-Man-(1-&gt;3)-alpha-D-Man-(1-&gt;3)-alpha-D-GlcNAc-di-trans,octa-cis-undecaprenyl diphosphate + S-adenosyl-L-methionine = 3-O-methylphospho-alpha-D-Man-(1-&gt;2)-alpha-D-Man-(1-&gt;2)-[alpha-D-Man-(1-&gt;3)-alpha-D-Man-(1-&gt;3)-alpha-D-Man-(1-&gt;2)-alpha-D-Man-(1-&gt;2)](n)-alpha-D-Man-(1-&gt;3)-alpha-D-Man-(1-&gt;3)-alpha-D-Man-(1-&gt;3)-alpha-D-GlcNAc-di-trans,octa-cis-undecaprenyl diphosphate + S-adenosyl-L-homocysteine. The catalysed reaction is alpha-D-Man-(1-&gt;2)-alpha-D-Man-(1-&gt;2)-[alpha-D-Man-(1-&gt;3)-alpha-D-Man-(1-&gt;3)-alpha-D-Man-(1-&gt;2)-alpha-D-Man-(1-&gt;2)](n)-alpha-D-Man-(1-&gt;3)-alpha-D-Man-(1-&gt;3)-alpha-D-Man-(1-&gt;3)-alpha-D-GlcNAc-di-trans,octa-cis-undecaprenyl diphosphate + ATP = 3-O-phospho-alpha-D-Man-(1-&gt;2)-alpha-D-Man-(1-&gt;2)-[alpha-D-Man-(1-&gt;3)-alpha-D-Man-(1-&gt;3)-alpha-D-Man-(1-&gt;2)-alpha-D-Man-(1-&gt;2)](n)-alpha-D-Man-(1-&gt;3)-alpha-D-Man-(1-&gt;3)-alpha-D-Man-(1-&gt;3)-alpha-D-GlcNAc-di-trans,octa-cis-undecaprenyl diphosphate + ADP + H(+). It participates in bacterial outer membrane biogenesis; LPS O-antigen biosynthesis. In terms of biological role, regulates the length of the LPS O-antigen polysaccharide chain. Stops the polymerization of the chain by phosphorylating and then methylating the phosphate on the terminal sugar. This terminal modification is essential for export of the O-antigen across the inner membrane. WbdD is also required for correct localization of the WbdA mannosyltransferase. The polypeptide is O-antigen chain terminator bifunctional methyltransferase/kinase WbdD (Escherichia coli).